Reading from the N-terminus, the 172-residue chain is Stellate protein CG33239/CG33241 (172 aa).

This sequence belongs to the casein kinase 2 subunit beta family. Interacts in vitro with the casein kinase 2 alpha subunit (CkII-alpha). The relevance of such interaction is however unclear in vivo. In terms of tissue distribution, probably not expressed in wild-type flies. In males lacking the Y chromosome, it is testis-specific and constitutes the main component of star-shaped crystals.

Unknown. In males lacking the Y chromosome, its strong overexpression leads to the appearance of proteinaceous star-shaped crystals in the primary spermatocytes causing meiotic drive, possibly by interfering with normal casein kinase 2 activity. This chain is Stellate protein CG33239/CG33241 (Ste:CG33239), found in Drosophila melanogaster (Fruit fly).